Reading from the N-terminus, the 1317-residue chain is DNA-directed RNA polymerase subunit beta' (1317 aa).

Zn(2+) is bound by residues cysteine 60, cysteine 62, cysteine 75, and cysteine 78. 3 residues coordinate Mg(2+): aspartate 535, aspartate 537, and aspartate 539. Residues cysteine 890, cysteine 967, cysteine 974, and cysteine 977 each coordinate Zn(2+).

It belongs to the RNA polymerase beta' chain family. The RNAP catalytic core consists of 2 alpha, 1 beta, 1 beta' and 1 omega subunit. When a sigma factor is associated with the core the holoenzyme is formed, which can initiate transcription. Mg(2+) is required as a cofactor. The cofactor is Zn(2+).

It catalyses the reaction RNA(n) + a ribonucleoside 5'-triphosphate = RNA(n+1) + diphosphate. Its function is as follows. DNA-dependent RNA polymerase catalyzes the transcription of DNA into RNA using the four ribonucleoside triphosphates as substrates. In Nocardia farcinica (strain IFM 10152), this protein is DNA-directed RNA polymerase subunit beta'.